The chain runs to 357 residues: MTVTRVGLVMHGGRAQAGDAARIVRGWCAERGVHCADIDVWRDDTRHSAREEVAAAGNPDLIVTLGGDGTFLRGARLAAENDALVLGVDLGRVGFLTEVPAAAVCEALEAVQEDRITVESRMLLTLRASRRLQVPTGMEALLRYGRGPLLPPPRVRTDCAEGDDWGIALHVTALNDIVLEKLARDRQVSVGVYLAGRLLASYSADALLVATPTGSTAYSFAAGGPVVSPRAEALIFTPVAPHMAFNRSVVAAPDEPIALRVLDRSGPAAVSVDGQLRGVLDPGDWIGVYAAPRRLKAVRLGPMDFYGRLRERMNLTDAPAAVADGQAAPLWPVTSAPPADLAHLTLPPGPGDTPSAS.

Catalysis depends on Asp68, which acts as the Proton acceptor. NAD(+) is bound by residues 68–69, Arg73, 175–176, Arg186, Asp205, Ala240, and Gln275; these read DG and ND.

The protein belongs to the NAD kinase family. Requires a divalent metal cation as cofactor.

It is found in the cytoplasm. The catalysed reaction is NAD(+) + ATP = ADP + NADP(+) + H(+). Involved in the regulation of the intracellular balance of NAD and NADP, and is a key enzyme in the biosynthesis of NADP. Catalyzes specifically the phosphorylation on 2'-hydroxyl of the adenosine moiety of NAD to yield NADP. This chain is NAD kinase 1, found in Streptomyces avermitilis (strain ATCC 31267 / DSM 46492 / JCM 5070 / NBRC 14893 / NCIMB 12804 / NRRL 8165 / MA-4680).